The sequence spans 2079 residues: Non-reducing polyketide synthase Dhc5 (2079 aa).

The tract at residues 9-246 (LLFGDVTDPW…DELNIHALQH (238 aa)) is N-terminal acylcarrier protein transacylase domain (SAT). The Ketosynthase family 3 (KS3) domain occupies 366-798 (NDGIAIVGMA…GGNACLLLED (433 aa)). Residues Cys-543, His-678, and His-717 each act as for beta-ketoacyl synthase activity in the active site. The tract at residues 895 to 1199 (VFVFTGQGSH…MTHSLQPKTS (305 aa)) is malonyl-CoA:ACP transacylase (MAT) domain. The active-site For acyl/malonyl transferase activity is Ser-986. The segment at 1268-1414 (EPLISTCAQY…DPTRSQVEWD (147 aa)) is N-terminal hotdog fold. Residues 1268-1584 (EPLISTCAQY…YQELPRATWK (317 aa)) enclose the PKS/mFAS DH domain. Residues 1304–1581 (MDGHKMQGIG…DIRYQELPRA (278 aa)) form a product template (PT) domain region. Positions 1435 to 1584 (RGHRMQPEVF…YQELPRATWK (150 aa)) are C-terminal hotdog fold. Residues 1613–1639 (RELQQPSSATVPAQETTIDEPEQQEGE) are disordered. A compositionally biased stretch (polar residues) spans 1615–1628 (LQQPSSATVPAQET). The region spanning 1641 to 1718 (AAGARLFNAI…DLRKEFRANE (78 aa)) is the Carrier domain. At Ser-1678 the chain carries O-(pantetheine 4'-phosphoryl)serine. A disordered region spans residues 1721–1784 (VENPRFSATP…EQKRPVKIDD (64 aa)). Residues 1727–1757 (SATPSSAEASIPSSPSSLAHPMSDSASSLSP) show a composition bias toward low complexity. Residues 1758 to 1784 (SDREEALPLERQSMTKREQKRPVKIDD) are compositionally biased toward basic and acidic residues. Residues 1812 to 2057 (ADGTGTIATY…LSVAGDHLDL (246 aa)) form a thioesterase (TE) domain region. His-2064 serves as the catalytic For thioesterase activity.

It participates in mycotoxin biosynthesis. In terms of biological role, highly reducing polyketide synthase; part of the gene cluster that mediates the biosynthesis of 10,11-dehydrocurvularin, a prevalent fungal phytotoxin with heat shock response and immune-modulatory activities. The highly reducing polyketide synthase Dhc3 is responsible for biosynthesis up to the tetraketide stage. The non-reducing polyketide synthase Dhc5 then conducts four additional chain extension cycles, producing the unreduced part of the nascent octaketide from C-1 to C-8 in 10,11-dehydrocurvularin. The sequence is that of Non-reducing polyketide synthase Dhc5 from Alternaria cinerariae.